The following is a 142-amino-acid chain: Hemoglobin subunit alpha-2 (142 aa).

The region spanning 2–142 (LLTADDKKHI…VSSVLTSKYR (141 aa)) is the Globin domain. H59 is an O2 binding site. H88 is a heme b binding site.

This sequence belongs to the globin family. Heterotetramer of two alpha chains and two beta chains. In terms of tissue distribution, red blood cells.

In terms of biological role, involved in oxygen transport from the lung to the various peripheral tissues. This chain is Hemoglobin subunit alpha-2 (hba2), found in Xenopus borealis (Kenyan clawed frog).